The sequence spans 300 residues: Ribosomal protein bS6--L-glutamate ligase (300 aa).

The ATP-grasp domain maps to 104-287; that stretch reads MQLLARQGID…IAGKMIRWIE (184 aa). Residues K141, 178–179, D187, and 211–213 contribute to the ATP site; these read EY and RSN. D248, E260, and N262 together coordinate Mg(2+). Mn(2+)-binding residues include D248, E260, and N262.

This sequence belongs to the RimK family. Mg(2+) serves as cofactor. The cofactor is Mn(2+).

An L-glutamate ligase that catalyzes the ATP-dependent post-translational addition of glutamate residues to the C-terminus of ribosomal protein bS6 (RpsF). Is also able to catalyze the synthesis of poly-alpha-glutamate in vitro, via ATP hydrolysis from unprotected glutamate as substrate. The number of glutamate residues added to either RpsF or to poly-alpha-glutamate changes with pH. The sequence is that of Ribosomal protein bS6--L-glutamate ligase from Escherichia fergusonii (strain ATCC 35469 / DSM 13698 / CCUG 18766 / IAM 14443 / JCM 21226 / LMG 7866 / NBRC 102419 / NCTC 12128 / CDC 0568-73).